A 492-amino-acid polypeptide reads, in one-letter code: GTPase-GDP dissociation stimulator arz1 (492 aa).

Its subcellular location is the cytoplasm. It is found in the nucleus. In terms of biological role, probably acts as a GEF (guanine nucleotide exchange factor) for the Rho family of small GTP-binding proteins (G proteins) that stimulates the dissociation of GDP to enable subsequent binding of GTP. May also chaperone the processing and/or trafficking of small GTPases independently of GEF activity. May be involved in the control of polarized cell growth via CDC42-mediated signaling. May also be involved in the control of cell-wall organization via RHO1-mediated signaling. In Schizosaccharomyces pombe (strain 972 / ATCC 24843) (Fission yeast), this protein is GTPase-GDP dissociation stimulator arz1.